A 1002-amino-acid polypeptide reads, in one-letter code: UPF0182 protein alr1037 (1002 aa).

Helical transmembrane passes span 7 to 29 (FRLS…LGAE), 49 to 71 (RGVL…LALA), 123 to 145 (LRWL…VHYG), 178 to 200 (QVFS…LIYS), 202 to 224 (FFLR…YNWA), 258 to 280 (LLEL…TYLL), 300 to 319 (HLYG…YWLS), 339 to 361 (VVVQ…FYLL), and 382 to 404 (GAYL…YLIV).

This sequence belongs to the UPF0182 family.

It localises to the cell membrane. This Nostoc sp. (strain PCC 7120 / SAG 25.82 / UTEX 2576) protein is UPF0182 protein alr1037.